We begin with the raw amino-acid sequence, 245 residues long: Acyl-protein thioesterase 1 (245 aa).

Catalysis depends on charge relay system residues S126, D182, and H214.

Belongs to the AB hydrolase superfamily. AB hydrolase 2 family.

The protein localises to the cytoplasm. Its subcellular location is the nucleus. The enzyme catalyses S-hexadecanoyl-L-cysteinyl-[protein] + H2O = L-cysteinyl-[protein] + hexadecanoate + H(+). Functionally, hydrolyzes fatty acids from S-acylated cysteine residues in proteins with a strong preference for palmitoylated G-alpha proteins over other acyl substrates. Mediates the deacylation of G-alpha proteins such as GPA1 in vivo, but has weak or no activity toward palmitoylated Ras proteins. Has weak lysophospholipase activity in vitro; however such activity may not exist in vivo. This is Acyl-protein thioesterase 1 from Neurospora crassa (strain ATCC 24698 / 74-OR23-1A / CBS 708.71 / DSM 1257 / FGSC 987).